A 654-amino-acid polypeptide reads, in one-letter code: Polyvinylalcohol dehydrogenase (654 aa).

Residues 1 to 32 (MGSHAWGGAVFSAATLIAFGSVVHASGTVAET) form the signal peptide. Positions 42 to 159 (ADQLDGETLY…AANQWNGWST (118 aa)) constitute a Cytochrome c domain. C55, C58, and H59 together coordinate heme c.

The protein belongs to the bacterial PQQ dehydrogenase family. Monomer. Pyrroloquinoline quinone serves as cofactor.

It localises to the periplasm. It carries out the reaction a polyvinyl alcohol + 2n Fe(III)-[cytochrome c] = an oxidized polyvinyl alcohol + 2n Fe(II)-[cytochrome c] + 2n H(+). Catalyzes the oxidation of polyvinyl alcohol (PVA) in the polyvinyl alcohol degradation pathway. This Sphingopyxis sp. (strain 113P3) protein is Polyvinylalcohol dehydrogenase (pvadh).